A 987-amino-acid chain; its full sequence is MMQTPFHKFFLLAMLSYSLLQGGHAADISMPPGIYDGTTLTAPFPYTVIGDPRGTKVTSSGSLELKNLDNSIATLPLSCFGNLLGNFTIAGRGHSLVFENIRTSTNGAALSNHAPSGLFVIEAFDELSLLNCNSLVSVVPQTGGTTTSVPSNGTIYSRTDLVLRDIKKVSFYSNLVSGDGGAIDAQSLMVNGIEKLCTFQENVAQSDGGACQVTKTFSAVGNKVPLSFLGNVAGNKGGGVAAVKDGQGAGGATDLSVNFANNTAVEFEGNSARIGGGIYSDGNISFLGNAKTVFLSNVASPIYVDPAAAGGQPPADKDNYGDGGAIFCKNDTNIGEVSFKDEGVVFFSKNIAAGKGGAIYAKKLTISDCGPVQFLGNVANDGGAIYLVDQGELSLSADRGDIIFDGNLKRMATQGAATVHDVMVASNAISMATGGQITTLRAKEGRRILFNDPIEMANGQPVIQTLTVNEGEGYTGDIVFAKGDNVLYSSIELSQGRIILREQTKLLVNSLTQTGGSVHMEGGSTLDFAVTTPPAANSMALTNVHFSLASLLKNNGVTNPPTNPPVQVSSPAVIGNTAAGTVTISGPIFFEDLDETAYDNNQWLGADQTIDVLQLHLGANPPANAPTDLTLGNESSKYGYQGSWTLQWEPDPANPPQNNSYMLKASWTKTGYNPGPERVASLVSNSLWGSILDVRSAHSAIQASIDGRAYCRGIWISGISNFFYHDQDALGQGYRHISGGYSIGANSYFGSSMFGLAFTETFGRSKDYVVCRSNDHTCVGSVYLSTRQALCGSCLFGDAFVRASYGFGNQHMKTSYTFAEESNVRWDNNCVVGEVGAGLPIMLAASKLYLNELRPFVQAEFAYAEHESFTERGDQAREFKSGHLMNLSIPVGVKFDRCSSKHPNKYSFMGAYICDAYRSISGTETTLLSHKETWTTDAFHLARHGVMVRGSMYASLTGNIEVYGHGKYEYRDASRGYGLSIGSKIRF.

A signal peptide spans 1-25; that stretch reads MMQTPFHKFFLLAMLSYSLLQGGHA. Residues 707–987 enclose the Autotransporter domain; the sequence is GRAYCRGIWI…GLSIGSKIRF (281 aa).

Belongs to the PMP outer membrane protein family.

The protein localises to the secreted. It is found in the cell wall. The protein resides in the cell outer membrane. In Chlamydia muridarum (strain MoPn / Nigg), this protein is Probable outer membrane protein PmpG (pmpG).